The following is a 313-amino-acid chain: Formimidoylglutamase (313 aa).

Positions 130, 155, 157, 159, 241, and 243 each coordinate Mn(2+).

The protein belongs to the arginase family. It depends on Mn(2+) as a cofactor.

It carries out the reaction N-formimidoyl-L-glutamate + H2O = formamide + L-glutamate. It functions in the pathway amino-acid degradation; L-histidine degradation into L-glutamate; L-glutamate from N-formimidoyl-L-glutamate (hydrolase route): step 1/1. In terms of biological role, catalyzes the conversion of N-formimidoyl-L-glutamate to L-glutamate and formamide. The protein is Formimidoylglutamase of Salmonella newport (strain SL254).